The sequence spans 346 residues: Very-long-chain 3-oxoacyl-CoA reductase (346 aa).

A helical membrane pass occupies residues 19–39; that stretch reads VLLGALLVGVFKLTVFILSVT. NADP(+) contacts are provided by Val65, Asp119, Asn146, Tyr220, Lys224, Val253, and Ser255. Tyr220 (proton donor) is an active-site residue. Lys224 functions as the Lowers pKa of active site Tyr in the catalytic mechanism.

Belongs to the short-chain dehydrogenases/reductases (SDR) family.

It is found in the endoplasmic reticulum membrane. It carries out the reaction a very-long-chain (3R)-3-hydroxyacyl-CoA + NADP(+) = a very-long-chain 3-oxoacyl-CoA + NADPH + H(+). It participates in lipid metabolism; fatty acid biosynthesis. Functionally, component of the microsomal membrane bound fatty acid elongation system, which produces the 26-carbon very long-chain fatty acids (VLCFA) from palmitate. Catalyzes the reduction of the 3-ketoacyl-CoA intermediate that is formed in each cycle of fatty acid elongation. VLCFAs serve as precursors for ceramide and sphingolipids. In Scheffersomyces stipitis (strain ATCC 58785 / CBS 6054 / NBRC 10063 / NRRL Y-11545) (Yeast), this protein is Very-long-chain 3-oxoacyl-CoA reductase.